Here is a 319-residue protein sequence, read N- to C-terminus: ATP-dependent 6-phosphofructokinase (319 aa).

An ATP-binding site is contributed by G11. 21–25 (RAVVR) serves as a coordination point for ADP. ATP contacts are provided by residues 72–73 (RS) and 102–105 (GDGS). A Mg(2+)-binding site is contributed by D103. Residue 125-127 (TID) coordinates substrate. The active-site Proton acceptor is the D127. R154 contributes to the ADP binding site. Substrate-binding positions include R162 and 169 to 171 (MGR). ADP is bound by residues 185–187 (GAE), R211, and 213–215 (KKH). Substrate is bound by residues E222, R243, and 249–252 (HVQR).

Belongs to the phosphofructokinase type A (PFKA) family. ATP-dependent PFK group I subfamily. Prokaryotic clade 'B1' sub-subfamily. In terms of assembly, homotetramer. It depends on Mg(2+) as a cofactor.

Its subcellular location is the cytoplasm. It catalyses the reaction beta-D-fructose 6-phosphate + ATP = beta-D-fructose 1,6-bisphosphate + ADP + H(+). It participates in carbohydrate degradation; glycolysis; D-glyceraldehyde 3-phosphate and glycerone phosphate from D-glucose: step 3/4. Allosterically activated by ADP and other diphosphonucleosides, and allosterically inhibited by phosphoenolpyruvate. Catalyzes the phosphorylation of D-fructose 6-phosphate to fructose 1,6-bisphosphate by ATP, the first committing step of glycolysis. This chain is ATP-dependent 6-phosphofructokinase, found in Natranaerobius thermophilus (strain ATCC BAA-1301 / DSM 18059 / JW/NM-WN-LF).